The chain runs to 255 residues: 1-(5-phosphoribosyl)-5-[(5-phosphoribosylamino)methylideneamino] imidazole-4-carboxamide isomerase (255 aa).

D8 serves as the catalytic Proton acceptor. The Proton donor role is filled by D129.

This sequence belongs to the HisA/HisF family.

The protein resides in the cytoplasm. It catalyses the reaction 1-(5-phospho-beta-D-ribosyl)-5-[(5-phospho-beta-D-ribosylamino)methylideneamino]imidazole-4-carboxamide = 5-[(5-phospho-1-deoxy-D-ribulos-1-ylimino)methylamino]-1-(5-phospho-beta-D-ribosyl)imidazole-4-carboxamide. It participates in amino-acid biosynthesis; L-histidine biosynthesis; L-histidine from 5-phospho-alpha-D-ribose 1-diphosphate: step 4/9. The protein is 1-(5-phosphoribosyl)-5-[(5-phosphoribosylamino)methylideneamino] imidazole-4-carboxamide isomerase of Prochlorococcus marinus (strain MIT 9303).